Here is a 222-residue protein sequence, read N- to C-terminus: UPF0758 protein YicR (222 aa).

The region spanning 100 to 222 (PLLSPEMTRE…YVSFAERGWI (123 aa)) is the MPN domain. The Zn(2+) site is built by H171, H173, and D184. The short motif at 171 to 184 (HNHPSGCAEPSKAD) is the JAMM motif element.

The protein belongs to the UPF0758 family. YicR subfamily.

This Escherichia coli O81 (strain ED1a) protein is UPF0758 protein YicR.